The chain runs to 441 residues: BTB/POZ domain-containing protein At4g30940 (441 aa).

The region spanning 6-74 (DRIKFNVGGR…LRTGDLNIPP (69 aa)) is the BTB domain.

It participates in protein modification; protein ubiquitination. Functionally, may act as a substrate-specific adapter of an E3 ubiquitin-protein ligase complex (CUL3-RBX1-BTB) which mediates the ubiquitination and subsequent proteasomal degradation of target proteins. The sequence is that of BTB/POZ domain-containing protein At4g30940 from Arabidopsis thaliana (Mouse-ear cress).